A 345-amino-acid polypeptide reads, in one-letter code: Dihydroorotase (345 aa).

Positions 14 and 16 each coordinate Zn(2+). Residues 16–18 and N42 each bind substrate; that span reads HLR. 3 residues coordinate Zn(2+): K100, H137, and H175. K100 bears the N6-carboxylysine mark. H137 serves as a coordination point for substrate. Position 220 (L220) interacts with substrate. D248 contacts Zn(2+). D248 is a catalytic residue. Residues H252 and A264 each contribute to the substrate site.

The protein belongs to the metallo-dependent hydrolases superfamily. DHOase family. Class II DHOase subfamily. In terms of assembly, homodimer. Zn(2+) serves as cofactor.

The enzyme catalyses (S)-dihydroorotate + H2O = N-carbamoyl-L-aspartate + H(+). It participates in pyrimidine metabolism; UMP biosynthesis via de novo pathway; (S)-dihydroorotate from bicarbonate: step 3/3. Catalyzes the reversible cyclization of carbamoyl aspartate to dihydroorotate. The sequence is that of Dihydroorotase from Nitrosococcus oceani (strain ATCC 19707 / BCRC 17464 / JCM 30415 / NCIMB 11848 / C-107).